The sequence spans 243 residues: UPF0246 protein SEQ_2141 (243 aa).

This sequence belongs to the UPF0246 family.

This Streptococcus equi subsp. equi (strain 4047) protein is UPF0246 protein SEQ_2141.